A 332-amino-acid polypeptide reads, in one-letter code: MKPRVFVTREIPERGLSKIEEHFELDLWKDEAPPSKKVIIERVKDCDALVSLLTDPIDAEVFEAAPKLRIVAQYAVGYDNIDVKEATKRGIYVTNTPGVLTETTADFAFALLMAAARRVVEADRYVREGKWKVAWHPMMMLGYDVYGRTLGIVGMGRIGAAVARRAKGFGMRILYYDSIRREDFEKELGVEYVPLEKLLEESDFVSLHVPLTEETYHMIGEEQLRRMKRTAILVNTSRGKVVDQKALYKALKEGWIAGAGLDVFEQEPIPPDDPLLKLENVVLAPHAASASHETRSRMAEMVAENLIAFKRGEIPPNLVNQEVVKVRPPGFQ.

Residues 155-158 (MGRI) and 236-238 (TSR) contribute to the NADP(+) site. Catalysis depends on residues Arg238 and Glu267. His286 serves as the catalytic Proton donor. An NADP(+)-binding site is contributed by 286–288 (HAA).

The protein belongs to the D-isomer specific 2-hydroxyacid dehydrogenase family. GyaR subfamily. Homodimer.

The protein localises to the cytoplasm. The catalysed reaction is glycolate + NAD(+) = glyoxylate + NADH + H(+). This chain is Glyoxylate reductase, found in Korarchaeum cryptofilum (strain OPF8).